The sequence spans 122 residues: Large ribosomal subunit protein uL14 (122 aa).

The protein belongs to the universal ribosomal protein uL14 family. Part of the 50S ribosomal subunit. Forms a cluster with proteins L3 and L19. In the 70S ribosome, L14 and L19 interact and together make contacts with the 16S rRNA in bridges B5 and B8.

In terms of biological role, binds to 23S rRNA. Forms part of two intersubunit bridges in the 70S ribosome. The polypeptide is Large ribosomal subunit protein uL14 (Limosilactobacillus fermentum (strain NBRC 3956 / LMG 18251) (Lactobacillus fermentum)).